We begin with the raw amino-acid sequence, 326 residues long: Tagatose 1,6-diphosphate aldolase (326 aa).

Belongs to the aldolase LacD family.

The enzyme catalyses D-tagatofuranose 1,6-bisphosphate = D-glyceraldehyde 3-phosphate + dihydroxyacetone phosphate. It functions in the pathway carbohydrate metabolism; D-tagatose 6-phosphate degradation; D-glyceraldehyde 3-phosphate and glycerone phosphate from D-tagatose 6-phosphate: step 2/2. In Streptococcus pneumoniae (strain ATCC BAA-255 / R6), this protein is Tagatose 1,6-diphosphate aldolase.